The primary structure comprises 592 residues: A-type ATP synthase subunit A (592 aa).

ATP is bound at residue 234–241; the sequence is GGFGTGKT.

This sequence belongs to the ATPase alpha/beta chains family. In terms of assembly, has multiple subunits with at least A(3), B(3), C, D, E, F, H, I and proteolipid K(x).

The protein localises to the cell membrane. It carries out the reaction ATP + H2O + 4 H(+)(in) = ADP + phosphate + 5 H(+)(out). Functionally, component of the A-type ATP synthase that produces ATP from ADP in the presence of a proton gradient across the membrane. The A chain is the catalytic subunit. The chain is A-type ATP synthase subunit A from Cenarchaeum symbiosum (strain A).